The following is a 112-amino-acid chain: Integration host factor subunit alpha (112 aa).

The protein belongs to the bacterial histone-like protein family. Heterodimer of an alpha and a beta chain.

Its function is as follows. This protein is one of the two subunits of integration host factor, a specific DNA-binding protein that functions in genetic recombination as well as in transcriptional and translational control. This is Integration host factor subunit alpha from Rhizobium etli (strain CIAT 652).